Consider the following 361-residue polypeptide: Chorismate synthase (361 aa).

NADP(+) is bound by residues arginine 48 and arginine 54. Residues arginine 125 to serine 127, asparagine 240 to alanine 241, glycine 286, lysine 301 to serine 305, and arginine 327 each bind FMN.

Belongs to the chorismate synthase family. In terms of assembly, homotetramer. Requires FMNH2 as cofactor.

The catalysed reaction is 5-O-(1-carboxyvinyl)-3-phosphoshikimate = chorismate + phosphate. It participates in metabolic intermediate biosynthesis; chorismate biosynthesis; chorismate from D-erythrose 4-phosphate and phosphoenolpyruvate: step 7/7. Functionally, catalyzes the anti-1,4-elimination of the C-3 phosphate and the C-6 proR hydrogen from 5-enolpyruvylshikimate-3-phosphate (EPSP) to yield chorismate, which is the branch point compound that serves as the starting substrate for the three terminal pathways of aromatic amino acid biosynthesis. This reaction introduces a second double bond into the aromatic ring system. The protein is Chorismate synthase of Magnetococcus marinus (strain ATCC BAA-1437 / JCM 17883 / MC-1).